A 292-amino-acid chain; its full sequence is Elongation factor Ts (292 aa).

The tract at residues 79-82 (TDFV) is involved in Mg(2+) ion dislocation from EF-Tu.

Belongs to the EF-Ts family.

Its subcellular location is the cytoplasm. Associates with the EF-Tu.GDP complex and induces the exchange of GDP to GTP. It remains bound to the aminoacyl-tRNA.EF-Tu.GTP complex up to the GTP hydrolysis stage on the ribosome. This is Elongation factor Ts from Xanthomonas campestris pv. campestris (strain ATCC 33913 / DSM 3586 / NCPPB 528 / LMG 568 / P 25).